The following is a 409-amino-acid chain: 3-dehydro-bile acid delta(4,6)-reductase (409 aa).

Residues serine 12, glutamate 33, valine 131, glutamate 378, asparagine 390, and leucine 391 each coordinate FAD.

It belongs to the BaiN/RdsA family. BaiN subfamily. FAD is required as a cofactor.

It carries out the reaction 3-oxocholan-24-oyl-CoA + NAD(+) = 3-oxochol-4-en-24-oyl-CoA + NADH + H(+). It catalyses the reaction 3-oxochol-4-en-24-oyl-CoA + NAD(+) = 3-oxochol-4,6-dien-24-oyl-CoA + NADH + H(+). The catalysed reaction is 12alpha-hydroxy-3-oxocholan-24-oyl-CoA + NAD(+) = 12alpha-hydroxy-3-oxochol-4-en-24-oyl-CoA + NADH + H(+). The enzyme catalyses 12alpha-hydroxy-3-oxochol-4-en-24-oyl-CoA + NAD(+) = 12alpha-hydroxy-3-oxochola-4,6-dien-24-oyl-CoA + NADH + H(+). Its pathway is lipid metabolism; bile acid degradation. Functionally, involved in the secondary bile acid metabolism. Catalyzes two subsequent reductions of the double bonds within the bile acid A/B rings of 3-oxochol-4,6-dien-24-oyl-CoA and 12alpha-hydroxy-3-oxochol-4,6-dien-24-oyl-CoA to yield 3-oxocholan-24-oyl-CoA and 12alpha-hydroxy-3-oxocholan-24-oyl-CoA, respectively. In Clostridium scindens (strain ATCC 35704 / DSM 5676 / VPI 13733 / 19), this protein is 3-dehydro-bile acid delta(4,6)-reductase.